The following is a 134-amino-acid chain: Holo-[acyl-carrier-protein] synthase (134 aa).

Mg(2+) contacts are provided by D8 and E57.

It belongs to the P-Pant transferase superfamily. AcpS family. Mg(2+) is required as a cofactor.

Its subcellular location is the cytoplasm. It catalyses the reaction apo-[ACP] + CoA = holo-[ACP] + adenosine 3',5'-bisphosphate + H(+). In terms of biological role, transfers the 4'-phosphopantetheine moiety from coenzyme A to a Ser of acyl-carrier-protein. This Rhizobium leguminosarum bv. trifolii (strain WSM2304) protein is Holo-[acyl-carrier-protein] synthase.